The following is a 103-amino-acid chain: Small ribosomal subunit protein uS10 (103 aa).

The protein belongs to the universal ribosomal protein uS10 family. Part of the 30S ribosomal subunit.

Involved in the binding of tRNA to the ribosomes. In Xanthomonas campestris pv. campestris (strain B100), this protein is Small ribosomal subunit protein uS10.